The following is a 516-amino-acid chain: uncharacterized protein (516 aa).

2 PFTB repeats span residues 45 to 86 and 401 to 443; these read RQDA…QRAD and DERA…DGSE.

This is an uncharacterized protein from Sinorhizobium fredii (strain NBRC 101917 / NGR234).